Here is a 597-residue protein sequence, read N- to C-terminus: Elongation factor 4 (597 aa).

One can recognise a tr-type G domain in the interval 2–184; it reads KNIRNFSIIA…SIVEHLPAPE (183 aa). GTP-binding positions include 14-19 and 131-134; these read DHGKST and NKID.

Belongs to the TRAFAC class translation factor GTPase superfamily. Classic translation factor GTPase family. LepA subfamily.

Its subcellular location is the cell inner membrane. It catalyses the reaction GTP + H2O = GDP + phosphate + H(+). Functionally, required for accurate and efficient protein synthesis under certain stress conditions. May act as a fidelity factor of the translation reaction, by catalyzing a one-codon backward translocation of tRNAs on improperly translocated ribosomes. Back-translocation proceeds from a post-translocation (POST) complex to a pre-translocation (PRE) complex, thus giving elongation factor G a second chance to translocate the tRNAs correctly. Binds to ribosomes in a GTP-dependent manner. The protein is Elongation factor 4 of Desulfotalea psychrophila (strain LSv54 / DSM 12343).